Here is a 391-residue protein sequence, read N- to C-terminus: Coproporphyrin III ferrochelatase (391 aa).

The Fe-coproporphyrin III site is built by S79 and Y148. Fe(2+) is bound by residues H211 and E305.

It belongs to the ferrochelatase family.

The protein resides in the cytoplasm. The catalysed reaction is Fe-coproporphyrin III + 2 H(+) = coproporphyrin III + Fe(2+). Its pathway is porphyrin-containing compound metabolism; protoheme biosynthesis. Its function is as follows. Involved in coproporphyrin-dependent heme b biosynthesis. Catalyzes the insertion of ferrous iron into coproporphyrin III to form Fe-coproporphyrin III. This Tropheryma whipplei (strain TW08/27) (Whipple's bacillus) protein is Coproporphyrin III ferrochelatase.